A 344-amino-acid polypeptide reads, in one-letter code: Lipopolysaccharide heptosyltransferase 3 (344 aa).

It belongs to the glycosyltransferase 9 family.

It carries out the reaction an L-alpha-D-Hep-(1-&gt;3)-4-O-phospho-L-alpha-D-Hep-(1-&gt;5)-[alpha-Kdo-(2-&gt;4)]-alpha-Kdo-(2-&gt;6)-lipid A + ADP-L-glycero-beta-D-manno-heptose = an L-alpha-D-Hep-(1-&gt;7)-L-alpha-D-Hep-(1-&gt;3)-4-O-phospho-L-alpha-D-Hep-(1-&gt;5)-[alpha-Kdo-(2-&gt;4)]-alpha-Kdo-(2-&gt;6)-lipid A + ADP + H(+). The catalysed reaction is L-alpha-D-Hep-(1-&gt;3)-4-O-phospho-L-alpha-D-Hep-(1-&gt;5)-[alpha-Kdo-(2-&gt;4)]-alpha-Kdo-(2-&gt;6)-lipid A (E. coli) + ADP-L-glycero-beta-D-manno-heptose = L-alpha-D-Hep-(1-&gt;7)-L-alpha-D-Hep-(1-&gt;3)-4-O-phospho-L-alpha-D-Hep-(1-&gt;5)-[alpha-Kdo-(2-&gt;4)]-alpha-Kdo-(2-&gt;6)-lipid A (E. coli) + ADP + H(+). The protein operates within bacterial outer membrane biogenesis; LPS core biosynthesis. Glycosyltransferase involved in the biosynthesis of the core oligosaccharide region of lipopolysaccharide (LPS). Catalyzes the addition of the third heptose unit (HepIII) to the second heptose unit (HepII) of the phospho-Hep2-Kdo2-lipid A module. This chain is Lipopolysaccharide heptosyltransferase 3, found in Escherichia coli (strain K12).